The chain runs to 35 residues: UPF0387 membrane protein YohO (35 aa).

The chain crosses the membrane as a helical span at residues 6–26; it reads IGVIALFLFMAFGGIGGVMLA.

The protein belongs to the UPF0387 family.

It localises to the cell inner membrane. The chain is UPF0387 membrane protein YohO from Escherichia coli O8 (strain IAI1).